The sequence spans 798 residues: Sodium/hydrogen exchanger 4 (798 aa).

Over 1–13 the chain is Cytoplasmic; the sequence is MALQMFVTYSPWN. The segment at residues 14–28 is an intramembrane region (name=A/M1); it reads CLLLLVALECSEASS. Over 29-69 the chain is Cytoplasmic; sequence DLNESANSTAQYASNAWFAAASSEPEEGISVFELDYDYVQI. An intramembrane region (name=B/M2) is located at residues 70-90; sequence PYEVTLWILLASLAKIGFHLY. The Cytoplasmic portion of the chain corresponds to 91-94; it reads HRLP. A helical membrane pass occupies residues 95-115; the sequence is GLMPESCLLILVGALVGGIIF. The Extracellular segment spans residues 116 to 127; it reads GTDHKSPPVMDS. Residues 128–148 traverse the membrane as a helical segment; it reads SIYFLYLLPPIVLEGGYFMPT. Residues 149 to 154 are Cytoplasmic-facing; it reads RPFFEN. The chain crosses the membrane as a helical span at residues 155–175; that stretch reads IGSILWWAVLGALINALGIGL. Residues 176–196 are Extracellular-facing; sequence SLYLICQVKAFGLGDVNLLQN. Residues 197–217 traverse the membrane as a helical segment; the sequence is LLFGSLISAVDPVAVLAVFEE. Residues 218–226 lie on the Cytoplasmic side of the membrane; it reads ARVNEQLYM. Residues 227 to 247 traverse the membrane as a helical segment; the sequence is MIFGEALLNDGITVVLYNMLI. Residues 248 to 270 lie on the Extracellular side of the membrane; the sequence is AFTKMHKFEDIETVDILAGCARF. The helical transmembrane segment at 271-291 threads the bilayer; it reads IVVGLGGVLFGIVFGFISAFI. Over 292–304 the chain is Cytoplasmic; sequence TRFTQNISAIEPL. A helical transmembrane segment spans residues 305 to 325; the sequence is IVFMFSYLSYLAAETLYLSGI. Topologically, residues 326-356 are extracellular; sequence LAITACAVTMKKYVEENVSQTSYTTIKYFMK. Residue asparagine 342 is glycosylated (N-linked (GlcNAc...) asparagine). A helical transmembrane segment spans residues 357 to 373; the sequence is MLSSVSETLIFIFMGVS. Residues 374 to 384 are Cytoplasmic-facing; it reads TVGKNHEWNWA. A helical membrane pass occupies residues 385-405; sequence FICFTLAFCQIWRAISVFALF. The Extracellular portion of the chain corresponds to 406 to 420; that stretch reads YISNQFRTFPFSIKD. The name=L intramembrane region spans 421-441; it reads QCIIFYSGVRGAGSFSLAFLL. Residues 442–450 lie on the Extracellular side of the membrane; sequence PLSLFPRKK. The helical transmembrane segment at 451–471 threads the bilayer; the sequence is MFVTATLVVIYFTVFIQGITV. At 472 to 798 the chain is on the cytoplasmic side; that stretch reads GPLVRYLDVK…RSHSPLLQKK (327 aa). 2 disordered regions span residues 662–690 and 776–798; these read PYGNPQSAGRDTRAAGFSDDDSSDPGSPS and RWTADHGHGRDHHRSHSPLLQKK. Residues 784 to 798 show a composition bias toward basic residues; that stretch reads GRDHHRSHSPLLQKK.

It belongs to the monovalent cation:proton antiporter 1 (CPA1) transporter (TC 2.A.36) family. Homodimer; each protomer has one site for sodium and one site for proton binding. Interacts with CHP1 and CHP2. In terms of processing, may be phosphorylated.

It is found in the basolateral cell membrane. The protein localises to the apical cell membrane. It localises to the zymogen granule membrane. It catalyses the reaction Na(+)(in) + H(+)(out) = Na(+)(out) + H(+)(in). It carries out the reaction Na(+)(out) + NH4(+)(in) = Na(+)(in) + NH4(+)(out). Electroneutral antiporter that exchanges sodium for protons or ammonium ions at the basolateral membrane of epithelia to regulate cell volume and intracellular pH upon hypertonic conditions. As part of transcellular ammonia transport in renal tubules, mediates basolateral ammonium extrusion in the medullary thick ascending limb, regulating the corticopapillary ammonium gradient and overall renal acid excretion. Mediates sodium:proton exchange in gastric parietal cells secondary to cAMP-dependent acid secretion and hyperosmolarity. Possibly coupled to chloride:bicarbonate antiporter, enables loading of parietal cells with sodium and chloride ions to maintain cell volume and normal gastric acid secretion. Functions as a sodium sensor in neurons of organum vasculosum of the lamina terminalis where it regulates water intake in response to increased sodium concentration in body fluids. In Homo sapiens (Human), this protein is Sodium/hydrogen exchanger 4 (SLC9A4).